The chain runs to 132 residues: Ribosome-binding factor A (132 aa).

The segment at 113-132 (EANSTRAKDDDEADTPAKDD) is disordered.

The protein belongs to the RbfA family. In terms of assembly, monomer. Binds 30S ribosomal subunits, but not 50S ribosomal subunits or 70S ribosomes.

It localises to the cytoplasm. One of several proteins that assist in the late maturation steps of the functional core of the 30S ribosomal subunit. Associates with free 30S ribosomal subunits (but not with 30S subunits that are part of 70S ribosomes or polysomes). Required for efficient processing of 16S rRNA. May interact with the 5'-terminal helix region of 16S rRNA. The protein is Ribosome-binding factor A of Burkholderia cenocepacia (strain HI2424).